The following is a 156-amino-acid chain: Cyanate hydratase (156 aa).

Active-site residues include Arg-96, Glu-99, and Ser-122.

The protein belongs to the cyanase family.

The enzyme catalyses cyanate + hydrogencarbonate + 3 H(+) = NH4(+) + 2 CO2. Functionally, catalyzes the reaction of cyanate with bicarbonate to produce ammonia and carbon dioxide. The protein is Cyanate hydratase of Escherichia coli (strain ATCC 8739 / DSM 1576 / NBRC 3972 / NCIMB 8545 / WDCM 00012 / Crooks).